Reading from the N-terminus, the 214-residue chain is MIENISKLIAEKVSSELNYDNERKEIIQYGTYALIQTLISIISVLILGLVFNIALEALIFLFTASILRKYSGGAHSESSNVCTLLGIIISICIGFLIKSSFFAKMNFELVVFIGIVIFVFGYFIVFKFAPVDTKNKPIKTEKKKKRMKKGSLKILTIYLFIEVLSIILYYNSGWSLAKPVMLSIIFGVAWQCMTLTYIGNILLKTIDSFTNKLL.

5 helical membrane-spanning segments follow: residues 41–61, 83–103, 109–129, 154–174, and 179–199; these read IISVLILGLVFNIALEALIFL, TLLGIIISICIGFLIKSSFFA, LVVFIGIVIFVFGYFIVFKFA, ILTIYLFIEVLSIILYYNSGW, and PVMLSIIFGVAWQCMTLTYIG.

It belongs to the AgrB family.

Its subcellular location is the cell membrane. Its function is as follows. May be involved in the proteolytic processing of a quorum sensing system signal molecule precursor. The protein is Putative AgrB-like protein 2 of Clostridium perfringens (strain 13 / Type A).